We begin with the raw amino-acid sequence, 262 residues long: Probable carboxylesterase Culp3 (262 aa).

The N-terminal stretch at 1–41 is a signal peptide; the sequence is MNNRPIRLLTSGRAGLGAGALITAVVLLIALGAVWTPVAFA. C44 and C114 are disulfide-bonded. S125 acts as the Nucleophile in catalysis. Cysteines 188 and 195 form a disulfide. The active site involves D192. The active-site Proton donor/acceptor is H206. The tract at residues 241 to 262 is disordered; sequence LPGSVLQMPGTAAPAPESLHGR.

This sequence belongs to the cutinase family.

The protein resides in the secreted. Shows weak esterase activity with the p-nitrophenol-linked aliphatic ester pNP-butyrate. Does not exhibit cutinase activity. This is Probable carboxylesterase Culp3 (cut3) from Mycobacterium tuberculosis (strain ATCC 25618 / H37Rv).